We begin with the raw amino-acid sequence, 276 residues long: Large ribosomal subunit protein uL2 (276 aa).

A disordered region spans residues 224 to 258 (VAMNPVDHPHGGGEGRTGEGRVPVSPWGTPTKGYR). Basic and acidic residues predominate over residues 230 to 242 (DHPHGGGEGRTGE).

Belongs to the universal ribosomal protein uL2 family. Part of the 50S ribosomal subunit. Forms a bridge to the 30S subunit in the 70S ribosome.

Functionally, one of the primary rRNA binding proteins. Required for association of the 30S and 50S subunits to form the 70S ribosome, for tRNA binding and peptide bond formation. It has been suggested to have peptidyltransferase activity; this is somewhat controversial. Makes several contacts with the 16S rRNA in the 70S ribosome. The sequence is that of Large ribosomal subunit protein uL2 from Polynucleobacter necessarius subsp. necessarius (strain STIR1).